We begin with the raw amino-acid sequence, 421 residues long: DUF724 domain-containing protein 8 (421 aa).

Polar residues-rich tracts occupy residues 149-165 (TQGSGDKTGDSVRNANE) and 199-213 (PRNQNGSGNDSTLEN). The disordered stretch occupies residues 149–229 (TQGSGDKTGD…NRKRKREENL (81 aa)). Residues 246–420 (VLPFEKKLRI…LEFLATASAP (175 aa)) form the DUF724 domain. Residues 361-397 (EKVTAEKESVKAENKRKILELQRLNEEMDKEIAQSKS) adopt a coiled-coil conformation.

Expressed in leaves and flowers, and at lower levels in roots, stems and siliques.

It is found in the nucleus. In terms of biological role, may be involved in the polar growth of plant cells via transportation of RNAs. This chain is DUF724 domain-containing protein 8, found in Arabidopsis thaliana (Mouse-ear cress).